A 205-amino-acid chain; its full sequence is Protein GrpE (205 aa).

The disordered stretch occupies residues M1–P40.

This sequence belongs to the GrpE family. As to quaternary structure, homodimer.

The protein resides in the cytoplasm. In terms of biological role, participates actively in the response to hyperosmotic and heat shock by preventing the aggregation of stress-denatured proteins, in association with DnaK and GrpE. It is the nucleotide exchange factor for DnaK and may function as a thermosensor. Unfolded proteins bind initially to DnaJ; upon interaction with the DnaJ-bound protein, DnaK hydrolyzes its bound ATP, resulting in the formation of a stable complex. GrpE releases ADP from DnaK; ATP binding to DnaK triggers the release of the substrate protein, thus completing the reaction cycle. Several rounds of ATP-dependent interactions between DnaJ, DnaK and GrpE are required for fully efficient folding. In Acidobacterium capsulatum (strain ATCC 51196 / DSM 11244 / BCRC 80197 / JCM 7670 / NBRC 15755 / NCIMB 13165 / 161), this protein is Protein GrpE.